The sequence spans 149 residues: CyanoQ (149 aa).

The first 21 residues, M1–S21, serve as a signal peptide directing secretion. C22 is lipidated: N-palmitoyl cysteine. The S-diacylglycerol cysteine moiety is linked to residue C22.

It belongs to the PsbQ family. CyanoQ subfamily. In terms of assembly, PSII is composed of 1 copy each of membrane proteins PsbA, PsbB, PsbC, PsbD, PsbE, PsbF, PsbH, PsbI, PsbJ, PsbK, PsbL, PsbM, PsbT, PsbX, PsbY, PsbZ, Psb30/Ycf12, peripheral proteins PsbO, CyanoQ (PsbQ), PsbU, PsbV and a large number of cofactors. It forms dimeric complexes. Pull-down experiments with His-tagged PsbQ pull down dimeric, but not monomeric, PSII. Post-translationally, the N-terminus is blocked. Upon expression in E.coli the N-terminus is modified with a diacylglycerol and an acyl group bound to two palmitates and one palmitoleate.

The protein resides in the cellular thylakoid membrane. Functionally, one of the extrinsic, lumenal subunits of photosystem II (PSII), which stabilize and protect the oxygen-evolving complex. PSII is a light-driven water plastoquinone oxidoreductase, using light energy to abstract electrons from H(2)O, generating a proton gradient subsequently used for ATP formation. Plays a role in the stability of the oxygen-evolving center on the luminal side of PSII. Required for optimal photoautotrophic growth in the absence of Ca(2+) or Cl(-), functions in optimizing PSII water oxidation/O(2) evolving activity. Requires PsbO to bind to PSII. In Synechocystis sp. (strain ATCC 27184 / PCC 6803 / Kazusa), this protein is CyanoQ.